A 1161-amino-acid chain; its full sequence is Cell wall protein DAN4 (1161 aa).

The first 19 residues, 1 to 19, serve as a signal peptide directing secretion; sequence MVNISIVAGIVALATSAAA. Disordered stretches follow at residues 123–309, 326–345, 354–547, and 691–713; these read TSTS…SASS, TPAT…STTN, TTTS…SSFG, and STDS…SSTA. The interval 134–286 is 46 X 3 AA tandem repeats of T-[SP]-T; it reads TSTTPTTTIT…TTSTTSTTST (153 aa). Residues 354–372 show a composition bias toward low complexity; that stretch reads TTTSDTYISSSSPSQVTSS. Repeat copies occupy residues 373-384, 385-396, 397-408, 409-420, 421-432, 433-444, 445-456, 457-468, 469-480, 481-492, 493-504, 505-516, 517-528, and 529-540. Residues 373–540 form a 14 X 12 AA approximate tandem repeats region; sequence AEPTTVSEVT…PIRSSQVTTT (168 aa). Residues 373–547 show a composition bias toward polar residues; that stretch reads AEPTTVSEVT…TTTEPVSSFG (175 aa). Repeat copies occupy residues 826–913 and 914–1001. Residues 826–1040 form a 2.5 X 88 AA approximate tandem repeats region; it reads EDSVLTKTQV…SPVSSFNSKA (215 aa). Residues 1002 to 1040 form a 2-3; truncated repeat; it reads EDVASTKTELLTMETTITSCSGGICTTLMSPVSSFNSKA. Asparagine 1137 is lipidated: GPI-anchor amidated asparagine. Positions 1138 to 1161 are cleaved as a propeptide — removed in mature form; the sequence is GAYNFDKDNIFGTAIVAVVALLLL.

It belongs to the SRP1/TIP1 family. Extensively O-glycosylated. In terms of processing, the GPI-anchor is attached to the protein in the endoplasmic reticulum and serves to target the protein to the cell surface. There, the glucosamine-inositol phospholipid moiety is cleaved off and the GPI-modified mannoprotein is covalently attached via its lipidless GPI glycan remnant to the 1,6-beta-glucan of the outer cell wall layer.

It localises to the secreted. The protein resides in the cell wall. Its subcellular location is the cell membrane. Its function is as follows. Component of the cell wall. In Saccharomyces cerevisiae (strain ATCC 204508 / S288c) (Baker's yeast), this protein is Cell wall protein DAN4.